A 567-amino-acid chain; its full sequence is Urease subunit alpha (567 aa).

The region spanning 129 to 567 (GGIDAHIHFI…LPLAQRYFLF (439 aa)) is the Urease domain. Ni(2+) contacts are provided by histidine 134, histidine 136, and lysine 217. At lysine 217 the chain carries N6-carboxylysine. Histidine 219 serves as a coordination point for substrate. Ni(2+)-binding residues include histidine 246 and histidine 272. Histidine 320 functions as the Proton donor in the catalytic mechanism. Aspartate 360 provides a ligand contact to Ni(2+).

It belongs to the metallo-dependent hydrolases superfamily. Urease alpha subunit family. In terms of assembly, heterotrimer of UreA (gamma), UreB (beta) and UreC (alpha) subunits. Three heterotrimers associate to form the active enzyme. It depends on Ni cation as a cofactor. Carboxylation allows a single lysine to coordinate two nickel ions.

The protein localises to the cytoplasm. The catalysed reaction is urea + 2 H2O + H(+) = hydrogencarbonate + 2 NH4(+). Its pathway is nitrogen metabolism; urea degradation; CO(2) and NH(3) from urea (urease route): step 1/1. This Hahella chejuensis (strain KCTC 2396) protein is Urease subunit alpha.